Here is a 587-residue protein sequence, read N- to C-terminus: ATP-dependent zinc metalloprotease FtsH 2 (587 aa).

Over 1–12 the chain is Cytoplasmic; sequence MSSDRTREVTKR. A helical membrane pass occupies residues 13-33; it reads ILMVLFGLWLLQFFFLPPLTT. At 34–102 the chain is on the extracellular side; that stretch reads RPTELSYSAF…EQRYEVTRTP (69 aa). A helical transmembrane segment spans residues 103–123; sequence WWVTLLPTVLWLAVMVGLFAW. Topologically, residues 124–587 are cytoplasmic; that stretch reads AQKRQAGAFG…GDDVRRILSA (464 aa). 192 to 199 contacts ATP; it reads GPPGTGKT. Residue H416 coordinates Zn(2+). Residue E417 is part of the active site. Zn(2+)-binding residues include H420 and D492.

This sequence in the central section; belongs to the AAA ATPase family. It in the C-terminal section; belongs to the peptidase M41 family. Homohexamer. It depends on Zn(2+) as a cofactor.

The protein resides in the cell membrane. In terms of biological role, acts as a processive, ATP-dependent zinc metallopeptidase for both cytoplasmic and membrane proteins. Plays a role in the quality control of integral membrane proteins. This chain is ATP-dependent zinc metalloprotease FtsH 2, found in Symbiobacterium thermophilum (strain DSM 24528 / JCM 14929 / IAM 14863 / T).